The primary structure comprises 1486 residues: Chromosome partition protein MukB (1486 aa).

34–41 (GGNGAGKS) is a binding site for ATP. Coiled-coil stretches lie at residues 326-418 (LEAD…QYNQ), 444-480 (LETF…QAYQ), and 509-603 (RHLA…RAPV). Positions 666 to 783 (PGGSEDQRLN…EVPLFGRAAR (118 aa)) are flexible hinge. Coiled-coil stretches lie at residues 835–923 (EAEI…AKLE), 977–1115 (EMLS…TAKA), and 1209–1266 (VEAI…QNVS).

The protein belongs to the SMC family. MukB subfamily. Homodimerization via its hinge domain. Binds to DNA via its C-terminal region. Interacts, and probably forms a ternary complex, with MukE and MukF via its C-terminal region. The complex formation is stimulated by calcium or magnesium. Interacts with tubulin-related protein FtsZ.

The protein resides in the cytoplasm. It is found in the nucleoid. Its function is as follows. Plays a central role in chromosome condensation, segregation and cell cycle progression. Functions as a homodimer, which is essential for chromosome partition. Involved in negative DNA supercoiling in vivo, and by this means organize and compact chromosomes. May achieve or facilitate chromosome segregation by condensation DNA from both sides of a centrally located replisome during cell division. The polypeptide is Chromosome partition protein MukB (Escherichia coli O9:H4 (strain HS)).